A 465-amino-acid polypeptide reads, in one-letter code: Argininosuccinate lyase (465 aa).

The protein belongs to the lyase 1 family. Argininosuccinate lyase subfamily.

It localises to the cytoplasm. It carries out the reaction 2-(N(omega)-L-arginino)succinate = fumarate + L-arginine. Its pathway is amino-acid biosynthesis; L-arginine biosynthesis; L-arginine from L-ornithine and carbamoyl phosphate: step 3/3. The sequence is that of Argininosuccinate lyase from Bradyrhizobium diazoefficiens (strain JCM 10833 / BCRC 13528 / IAM 13628 / NBRC 14792 / USDA 110).